Here is a 154-residue protein sequence, read N- to C-terminus: Interleukin-7 (154 aa).

A signal peptide spans 1 to 25 (MFHVSFRYIFGIPPLILVLLPVTSS). 3 disulfides stabilise this stretch: C27–C145, C58–C133, and C71–C116. N94 and N115 each carry an N-linked (GlcNAc...) asparagine glycan.

It belongs to the IL-7/IL-9 family. Interacts with IL7R and CSF2RG. In terms of processing, three disulfide bonds are present.

It localises to the secreted. Its function is as follows. Hematopoietic cytokine that plays an essential role in the development, expansion, and survival of naive and memory T-cells and B-cells thereby regulating the number of mature lymphocytes and maintaining lymphoid homeostasis. Mechanistically, exerts its biological effects through a receptor composed of IL7RA subunit and the cytokine receptor common subunit gamma/CSF2RG. Binding to the receptor leads to activation of various kinases including JAK1 or JAK3 depending on the cell type and subsequently propagation of signals through activation of several downstream signaling pathways including the PI3K/Akt/mTOR or the JAK-STAT5. The sequence is that of Interleukin-7 (Il7) from Rattus norvegicus (Rat).